Consider the following 387-residue polypeptide: Penicillopepsin-1 (387 aa).

An N-terminal signal peptide occupies residues 1–19; it reads MVNSKTVVSALALSALAAA. The propeptide at 20–66 is activation peptide; sequence APAPSSTTSFSINQVAVKKPAIHPAVKYAKALAKYHAEIPSNVASAA. The Peptidase A1 domain occupies 85–384; the sequence is YVTPITAGSS…DGDNLQLGFA (300 aa). Active-site residues include Asp-101 and Asp-279. Asn-304 carries N-linked (GlcNAc...) asparagine glycosylation. Residues Cys-315 and Cys-347 are joined by a disulfide bond.

The protein belongs to the peptidase A1 family. Monomer.

Its subcellular location is the secreted. It carries out the reaction Hydrolysis of proteins with broad specificity similar to that of pepsin A, preferring hydrophobic residues at P1 and P1', but also cleaving 20-Gly-|-Glu-21 in the B chain of insulin. Clots milk, and activates trypsinogen.. Secreted aspartic endopeptidase that allows assimilation of proteinaceous substrates. The scissile peptide bond is attacked by a nucleophilic water molecule activated by two aspartic residues in the active site. Shows a broad primary substrate specificity. Favors hydrophobic residues at the P1 and P1' positions, but can also activate trypsinogen and hydrolyze the B chain of insulin between positions 'Gly-20' and 'Glu-21'. This is Penicillopepsin-1 (pepA) from Talaromyces stipitatus (strain ATCC 10500 / CBS 375.48 / QM 6759 / NRRL 1006) (Penicillium stipitatum).